Here is a 129-residue protein sequence, read N- to C-terminus: uncharacterized protein (129 aa).

The first 24 residues, 1–24 (MAFGWHSMHGSIIWFLQIAQLSTA), serve as a signal peptide directing secretion. 2 helical membrane-spanning segments follow: residues 38–58 (ISNL…CAIF) and 95–115 (IAHI…FTPL).

The protein localises to the membrane. This is an uncharacterized protein from Saccharomyces cerevisiae (strain ATCC 204508 / S288c) (Baker's yeast).